A 353-amino-acid polypeptide reads, in one-letter code: Quinolinate synthase (353 aa).

Positions 47 and 68 each coordinate iminosuccinate. Residue C113 coordinates [4Fe-4S] cluster. Iminosuccinate-binding positions include 139–141 and S156; that span reads YAN. C200 lines the [4Fe-4S] cluster pocket. Iminosuccinate contacts are provided by residues 226-228 and T243; that span reads HPE. A [4Fe-4S] cluster-binding site is contributed by C297.

The protein belongs to the quinolinate synthase family. Type 1 subfamily. The cofactor is [4Fe-4S] cluster.

The protein resides in the cytoplasm. It catalyses the reaction iminosuccinate + dihydroxyacetone phosphate = quinolinate + phosphate + 2 H2O + H(+). It participates in cofactor biosynthesis; NAD(+) biosynthesis; quinolinate from iminoaspartate: step 1/1. Functionally, catalyzes the condensation of iminoaspartate with dihydroxyacetone phosphate to form quinolinate. In Vibrio vulnificus (strain CMCP6), this protein is Quinolinate synthase.